Consider the following 530-residue polypeptide: BTB/POZ domain-containing protein 3 (530 aa).

The interval 23–48 (KNRSKKGSKKANSSGGGGGGGSVGSG) is disordered. Residues 36 to 46 (SGGGGGGGSVG) show a composition bias toward gly residues. The region spanning 128 to 198 (ADVHFVVGPP…IYCDEIDLAA (71 aa)) is the BTB domain. Residues 243 to 308 (FEEPDLTQRC…NWAEVECQRQ (66 aa)) enclose the BACK domain.

In the somatosensory cortex, specifically expressed in spiny stellate neurons during barrel formation. Also expressed in the olfactory bulb, piriform cortex and hippocampus.

The protein resides in the cytoplasm. It localises to the cytosol. Its subcellular location is the nucleus. Acts as a key regulator of dendritic field orientation during development of sensory cortex. Also directs dendrites toward active axon terminals when ectopically expressed. This is BTB/POZ domain-containing protein 3 (Btbd3) from Mus musculus (Mouse).